Reading from the N-terminus, the 206-residue chain is Putative transporter protein AmiS2 (206 aa).

7 helical membrane passes run 4-24 (VGLLYVGAVLFVNGLMLLGTV), 29-49 (ASVLNLFVGALQCVVPTVMLI), 56-76 (SAVLAASGLYLFGFTYLYVGI), 86-106 (GIGWFSLFVACAALVYSFLSF), 113-133 (VFGVIWLAWAALWTLFFLVLG), 142-162 (FTGWAAILLSQPTCTVPAFLI), and 173-193 (VAAGWAGALLVLLGLAKILAA).

The protein belongs to the AmiS/UreI family.

It localises to the cell membrane. In terms of biological role, possible transporter that might be responsible for the adsorption of amidase substrates or release of their hydrolysis products. This is Putative transporter protein AmiS2 (amiS2) from Rhodococcus erythropolis (Arthrobacter picolinophilus).